The sequence spans 402 residues: D-mannonate dehydratase (402 aa).

Residues asparagine 37 and histidine 122 each coordinate substrate. Catalysis depends on tyrosine 159, which acts as the Proton donor/acceptor. Residue aspartate 210 coordinates Mg(2+). Catalysis depends on histidine 212, which acts as the Proton donor/acceptor. Residues glutamate 236 and glutamate 262 each coordinate Mg(2+). The substrate site is built by glutamate 262, arginine 283, histidine 312, aspartate 316, and glutamate 339.

The protein belongs to the mandelate racemase/muconate lactonizing enzyme family. GalD subfamily. In terms of assembly, homotetramer. Mg(2+) is required as a cofactor.

It carries out the reaction D-mannonate = 2-dehydro-3-deoxy-D-gluconate + H2O. The protein operates within carbohydrate metabolism; pentose and glucuronate interconversion. Catalyzes the dehydration of D-mannonate. Has no detectable activity with a panel of 70 other acid sugars (in vitro). In Novosphingobium aromaticivorans (strain ATCC 700278 / DSM 12444 / CCUG 56034 / CIP 105152 / NBRC 16084 / F199), this protein is D-mannonate dehydratase (manD).